We begin with the raw amino-acid sequence, 89 residues long: Small ribosomal subunit protein uS19 (89 aa).

This sequence belongs to the universal ribosomal protein uS19 family.

Functionally, protein S19 forms a complex with S13 that binds strongly to the 16S ribosomal RNA. The chain is Small ribosomal subunit protein uS19 from Bacteroides fragilis (strain YCH46).